We begin with the raw amino-acid sequence, 1473 residues long: Ovostatin (1473 aa).

Positions 1–36 (MHCFLGREILSFFCLTVRKMWLKFILAILLLHAAAG) are cleaved as a signal peptide. Asn-67, Asn-82, Asn-89, Asn-191, Asn-342, Asn-403, Asn-527, Asn-588, Asn-757, Asn-1141, Asn-1221, Asn-1315, and Asn-1347 each carry an N-linked (GlcNAc...) asparagine glycan.

It belongs to the protease inhibitor I39 (alpha-2-macroglobulin) family. Homotetramer, which consists of two pairs of disulfide-linked chains. In terms of processing, lacks the thioester bond found in other members of this family. Post-translationally, glycosylated; contains 56 glucosamine units per subunit.

It localises to the secreted. Is able to inhibit all four classes of proteinases by a unique 'trapping' mechanism. This protein has a peptide stretch, called the 'bait region' which contains specific cleavage sites for different proteinases. When a proteinase cleaves the bait region, a conformational change is induced in the protein which traps the proteinase. The entrapped enzyme remains active against low molecular weight substrates (activity against high molecular weight substrates is greatly reduced). In Gallus gallus (Chicken), this protein is Ovostatin.